A 126-amino-acid polypeptide reads, in one-letter code: Ribosome-binding factor A (126 aa).

The protein belongs to the RbfA family. Monomer. Binds 30S ribosomal subunits, but not 50S ribosomal subunits or 70S ribosomes.

The protein resides in the cytoplasm. One of several proteins that assist in the late maturation steps of the functional core of the 30S ribosomal subunit. Associates with free 30S ribosomal subunits (but not with 30S subunits that are part of 70S ribosomes or polysomes). Required for efficient processing of 16S rRNA. May interact with the 5'-terminal helix region of 16S rRNA. The polypeptide is Ribosome-binding factor A (Geobacillus sp. (strain WCH70)).